The sequence spans 232 residues: F420-dependent NADP reductase (232 aa).

Residues 15-18 (TGDQ), 37-38 (SR), Lys42, Val80, Val106, and Ala151 each bind NADP(+).

It belongs to the F420-dependent NADP reductase family. Homotetramer.

The catalysed reaction is reduced coenzyme F420-(gamma-L-Glu)(n) + NADP(+) = oxidized coenzyme F420-(gamma-L-Glu)(n) + NADPH + 2 H(+). Its function is as follows. Catalyzes the reduction of NADP(+) with F420H(2) via hydride transfer, and likely the reverse reaction, i.e. the reduction of F420 with NADPH. Probably functions in the regeneration of NADPH required in biosynthetic reactions. Is specific for reduced F420 as electron donor for the reduction of NADP; neither reduced FAD nor FMN can act as electron donor. The enzyme is also specific for NADP; NAD is not utilized as substrate. In Methanothermobacter thermautotrophicus (strain ATCC 29096 / DSM 1053 / JCM 10044 / NBRC 100330 / Delta H) (Methanobacterium thermoautotrophicum), this protein is F420-dependent NADP reductase (fno).